We begin with the raw amino-acid sequence, 160 residues long: Eosinophil cationic protein (160 aa).

The first 27 residues, 1–27 (MVPKLFTPQICLLLLLGLMGVEGSLHA), serve as a signal peptide directing secretion. The tract at residues 28-72 (RPPQFTKAQWFAIQHINVNPPRCTIAMRVINNYQRRCKNQNTFLR) is required for nearly all of the bactericidal activities; partially involved in LPS-binding. The active-site Proton acceptor is the His-42. Disulfide bonds link Cys-50–Cys-110, Cys-64–Cys-123, Cys-82–Cys-138, and Cys-89–Cys-98. The residue at position 60 (Tyr-60) is a 3'-nitrotyrosine. 65-69 (KNQNT) is a binding site for substrate. 3 N-linked (GlcNAc...) asparagine glycosylation sites follow: Asn-84, Asn-92, and Asn-119. The active-site Proton donor is the His-155.

This sequence belongs to the pancreatic ribonuclease family. In terms of assembly, interacts with bacterial lipopolysaccharide (LPS) and lipoteichoic acid (LTA). In vitro interacts with phospholipid bilayers.

It is found in the secreted. Functionally, cytotoxin and helminthotoxin with low-efficiency ribonuclease activity. Possesses a wide variety of biological activities. Exhibits antibacterial activity. The polypeptide is Eosinophil cationic protein (RNASE3) (Macaca nemestrina (Pig-tailed macaque)).